Here is an 836-residue protein sequence, read N- to C-terminus: Phenylalanine--tRNA ligase beta subunit (836 aa).

In terms of domain architecture, tRNA-binding spans 44 to 160 (PETTGPLVIG…EIAEPGTDAR (117 aa)). The 76-residue stretch at 420-495 (PSMPQIRMKT…RLEGLEDIPT (76 aa)) folds into the B5 domain. Mg(2+) contacts are provided by Asp473, Asp479, Glu482, and Glu483. Residues 742–835 (SAFPVLHQDL…AAELFGATMR (94 aa)) enclose the FDX-ACB domain.

It belongs to the phenylalanyl-tRNA synthetase beta subunit family. Type 1 subfamily. As to quaternary structure, tetramer of two alpha and two beta subunits. Mg(2+) serves as cofactor.

It localises to the cytoplasm. It carries out the reaction tRNA(Phe) + L-phenylalanine + ATP = L-phenylalanyl-tRNA(Phe) + AMP + diphosphate + H(+). The polypeptide is Phenylalanine--tRNA ligase beta subunit (Corynebacterium diphtheriae (strain ATCC 700971 / NCTC 13129 / Biotype gravis)).